The primary structure comprises 643 residues: 1-deoxy-D-xylulose-5-phosphate synthase (643 aa).

Thiamine diphosphate-binding positions include histidine 72 and 113–115; that span reads GHA. Aspartate 144 provides a ligand contact to Mg(2+). Residues 145-146, asparagine 174, tyrosine 287, and glutamate 370 contribute to the thiamine diphosphate site; that span reads GA. Residue asparagine 174 participates in Mg(2+) binding.

Belongs to the transketolase family. DXPS subfamily. As to quaternary structure, homodimer. Mg(2+) is required as a cofactor. The cofactor is thiamine diphosphate.

It carries out the reaction D-glyceraldehyde 3-phosphate + pyruvate + H(+) = 1-deoxy-D-xylulose 5-phosphate + CO2. It functions in the pathway metabolic intermediate biosynthesis; 1-deoxy-D-xylulose 5-phosphate biosynthesis; 1-deoxy-D-xylulose 5-phosphate from D-glyceraldehyde 3-phosphate and pyruvate: step 1/1. Functionally, catalyzes the acyloin condensation reaction between C atoms 2 and 3 of pyruvate and glyceraldehyde 3-phosphate to yield 1-deoxy-D-xylulose-5-phosphate (DXP). In Prochlorococcus marinus (strain SARG / CCMP1375 / SS120), this protein is 1-deoxy-D-xylulose-5-phosphate synthase.